A 305-amino-acid polypeptide reads, in one-letter code: Methionyl-tRNA formyltransferase (305 aa).

A (6S)-5,6,7,8-tetrahydrofolate-binding site is contributed by 111 to 114; it reads SLLP.

This sequence belongs to the Fmt family.

The enzyme catalyses L-methionyl-tRNA(fMet) + (6R)-10-formyltetrahydrofolate = N-formyl-L-methionyl-tRNA(fMet) + (6S)-5,6,7,8-tetrahydrofolate + H(+). Attaches a formyl group to the free amino group of methionyl-tRNA(fMet). The formyl group appears to play a dual role in the initiator identity of N-formylmethionyl-tRNA by promoting its recognition by IF2 and preventing the misappropriation of this tRNA by the elongation apparatus. The protein is Methionyl-tRNA formyltransferase of Helicobacter pylori (strain HPAG1).